The chain runs to 332 residues: UDP-3-O-acylglucosamine N-acyltransferase (332 aa).

His-231 (proton acceptor) is an active-site residue.

This sequence belongs to the transferase hexapeptide repeat family. LpxD subfamily. As to quaternary structure, homotrimer.

The catalysed reaction is a UDP-3-O-[(3R)-3-hydroxyacyl]-alpha-D-glucosamine + a (3R)-hydroxyacyl-[ACP] = a UDP-2-N,3-O-bis[(3R)-3-hydroxyacyl]-alpha-D-glucosamine + holo-[ACP] + H(+). It participates in bacterial outer membrane biogenesis; LPS lipid A biosynthesis. Its function is as follows. Catalyzes the N-acylation of UDP-3-O-acylglucosamine using 3-hydroxyacyl-ACP as the acyl donor. Is involved in the biosynthesis of lipid A, a phosphorylated glycolipid that anchors the lipopolysaccharide to the outer membrane of the cell. The polypeptide is UDP-3-O-acylglucosamine N-acyltransferase (Ruthia magnifica subsp. Calyptogena magnifica).